The sequence spans 447 residues: Glutamate--tRNA ligase 1 (447 aa).

The short motif at 10–20 (PSPTGMLHVGN) is the 'HIGH' region element. Residues 240–244 (KISKR) carry the 'KMSKS' region motif. ATP is bound at residue lysine 243.

This sequence belongs to the class-I aminoacyl-tRNA synthetase family. Glutamate--tRNA ligase type 1 subfamily. As to quaternary structure, monomer.

Its subcellular location is the cytoplasm. It carries out the reaction tRNA(Glu) + L-glutamate + ATP = L-glutamyl-tRNA(Glu) + AMP + diphosphate. In terms of biological role, catalyzes the attachment of glutamate to tRNA(Glu) in a two-step reaction: glutamate is first activated by ATP to form Glu-AMP and then transferred to the acceptor end of tRNA(Glu). The sequence is that of Glutamate--tRNA ligase 1 from Rickettsia prowazekii (strain Madrid E).